The following is a 202-amino-acid chain: Putative 3-methyladenine DNA glycosylase (202 aa).

This sequence belongs to the DNA glycosylase MPG family.

This is Putative 3-methyladenine DNA glycosylase from Rhodopseudomonas palustris (strain BisB5).